We begin with the raw amino-acid sequence, 509 residues long: Cysteine--tRNA ligase (509 aa).

C19 contacts Zn(2+). A 'HIGH' region motif is present at residues 21–31 (PTVYNDAHIGH). Zn(2+) is bound by residues C213, H238, and E242. Residues 284–288 (KMSKS) carry the 'KMSKS' region motif. Residue K287 coordinates ATP.

Belongs to the class-I aminoacyl-tRNA synthetase family. It depends on Zn(2+) as a cofactor.

The enzyme catalyses tRNA(Cys) + L-cysteine + ATP = L-cysteinyl-tRNA(Cys) + AMP + diphosphate. The polypeptide is Cysteine--tRNA ligase (CARS) (Acanthamoeba polyphaga (Amoeba)).